Here is a 665-residue protein sequence, read N- to C-terminus: DNA ligase (665 aa).

Residues 31–35 (DEEFD), 80–81 (SL), and E111 each bind NAD(+). K113 acts as the N6-AMP-lysine intermediate in catalysis. The NAD(+) site is built by R134, E171, K287, and K311. Zn(2+)-binding residues include C405, C408, C423, and C429. Residues 588 to 665 (FTNHAFQGKI…NEKEFISLCH (78 aa)) form the BRCT domain.

This sequence belongs to the NAD-dependent DNA ligase family. LigA subfamily. The cofactor is Mg(2+). Requires Mn(2+) as cofactor.

The catalysed reaction is NAD(+) + (deoxyribonucleotide)n-3'-hydroxyl + 5'-phospho-(deoxyribonucleotide)m = (deoxyribonucleotide)n+m + AMP + beta-nicotinamide D-nucleotide.. Functionally, DNA ligase that catalyzes the formation of phosphodiester linkages between 5'-phosphoryl and 3'-hydroxyl groups in double-stranded DNA using NAD as a coenzyme and as the energy source for the reaction. It is essential for DNA replication and repair of damaged DNA. The chain is DNA ligase from Protochlamydia amoebophila (strain UWE25).